A 229-amino-acid polypeptide reads, in one-letter code: Flagellar L-ring protein (229 aa).

The signal sequence occupies residues 1 to 25 (MKQVRLLPPAPVRAVCALAVAALAG). Cys26 carries the N-palmitoyl cysteine lipid modification. Residue Cys26 is the site of S-diacylglycerol cysteine attachment.

This sequence belongs to the FlgH family. As to quaternary structure, the basal body constitutes a major portion of the flagellar organelle and consists of four rings (L,P,S, and M) mounted on a central rod.

It is found in the cell outer membrane. It localises to the bacterial flagellum basal body. In terms of biological role, assembles around the rod to form the L-ring and probably protects the motor/basal body from shearing forces during rotation. This Burkholderia ambifaria (strain ATCC BAA-244 / DSM 16087 / CCUG 44356 / LMG 19182 / AMMD) (Burkholderia cepacia (strain AMMD)) protein is Flagellar L-ring protein.